The following is a 915-amino-acid chain: Rab3 GTPase-activating protein catalytic subunit (915 aa).

It belongs to the Rab3-GAP catalytic subunit family. The Rab3 GTPase-activating complex is a heterodimer composed of rbg-1 and rbg-2.

It localises to the cytoplasm. Probable catalytic subunit of a GTPase activating protein that has specificity for Rab3 subfamily. Rab3 proteins are involved in regulated exocytosis of neurotransmitters and hormones. Specifically converts active Rab3-GTP to the inactive form Rab3-GDP. The chain is Rab3 GTPase-activating protein catalytic subunit (rbg-1) from Caenorhabditis elegans.